Here is a 343-residue protein sequence, read N- to C-terminus: 4-hydroxy-2-oxovalerate aldolase 2 (343 aa).

Residues 8 to 260 (ITVHDMSLRD…ETGVDVFAIS (253 aa)) form the Pyruvate carboxyltransferase domain. 16–17 (RD) is a binding site for substrate. Residue Asp17 coordinates Mn(2+). The active-site Proton acceptor is His20. Substrate-binding residues include Ser170 and His199. Residues His199 and His201 each contribute to the Mn(2+) site. Tyr290 is a binding site for substrate.

The protein belongs to the 4-hydroxy-2-oxovalerate aldolase family.

It carries out the reaction (S)-4-hydroxy-2-oxopentanoate = acetaldehyde + pyruvate. This is 4-hydroxy-2-oxovalerate aldolase 2 from Burkholderia lata (strain ATCC 17760 / DSM 23089 / LMG 22485 / NCIMB 9086 / R18194 / 383).